Reading from the N-terminus, the 134-residue chain is Ribonuclease P protein component (134 aa).

The protein belongs to the RnpA family. In terms of assembly, consists of a catalytic RNA component (M1 or rnpB) and a protein subunit.

The catalysed reaction is Endonucleolytic cleavage of RNA, removing 5'-extranucleotides from tRNA precursor.. In terms of biological role, RNaseP catalyzes the removal of the 5'-leader sequence from pre-tRNA to produce the mature 5'-terminus. It can also cleave other RNA substrates such as 4.5S RNA. The protein component plays an auxiliary but essential role in vivo by binding to the 5'-leader sequence and broadening the substrate specificity of the ribozyme. This chain is Ribonuclease P protein component, found in Ectopseudomonas mendocina (strain ymp) (Pseudomonas mendocina).